The primary structure comprises 401 residues: S-adenosylmethionine synthase (401 aa).

137–142 serves as a coordination point for ATP; that stretch reads GEGSGD. The segment at 272–305 is disordered; that stretch reads GTSAEQGDDGSVGRGNRSNGLITPNRSMSMEATS. Residues 287 to 305 show a composition bias toward polar residues; sequence NRSNGLITPNRSMSMEATS.

Belongs to the AdoMet synthase 2 family. The cofactor is Mg(2+).

It carries out the reaction L-methionine + ATP + H2O = S-adenosyl-L-methionine + phosphate + diphosphate. It participates in amino-acid biosynthesis; S-adenosyl-L-methionine biosynthesis; S-adenosyl-L-methionine from L-methionine: step 1/1. Catalyzes the formation of S-adenosylmethionine from methionine and ATP. The protein is S-adenosylmethionine synthase of Natronomonas pharaonis (strain ATCC 35678 / DSM 2160 / CIP 103997 / JCM 8858 / NBRC 14720 / NCIMB 2260 / Gabara) (Halobacterium pharaonis).